We begin with the raw amino-acid sequence, 265 residues long: 4-hydroxy-tetrahydrodipicolinate reductase (265 aa).

NAD(+) is bound by residues 7 to 12 (GASGRM) and D33. R34 contributes to the NADP(+) binding site. NAD(+) contacts are provided by residues 96–98 (GTT) and 120–123 (AANM). H153 serves as the catalytic Proton donor/acceptor. H154 is a binding site for (S)-2,3,4,5-tetrahydrodipicolinate. K157 (proton donor) is an active-site residue. Residue 163 to 164 (GT) participates in (S)-2,3,4,5-tetrahydrodipicolinate binding.

This sequence belongs to the DapB family.

It localises to the cytoplasm. The catalysed reaction is (S)-2,3,4,5-tetrahydrodipicolinate + NAD(+) + H2O = (2S,4S)-4-hydroxy-2,3,4,5-tetrahydrodipicolinate + NADH + H(+). It carries out the reaction (S)-2,3,4,5-tetrahydrodipicolinate + NADP(+) + H2O = (2S,4S)-4-hydroxy-2,3,4,5-tetrahydrodipicolinate + NADPH + H(+). The protein operates within amino-acid biosynthesis; L-lysine biosynthesis via DAP pathway; (S)-tetrahydrodipicolinate from L-aspartate: step 4/4. Its function is as follows. Catalyzes the conversion of 4-hydroxy-tetrahydrodipicolinate (HTPA) to tetrahydrodipicolinate. This Burkholderia vietnamiensis (strain G4 / LMG 22486) (Burkholderia cepacia (strain R1808)) protein is 4-hydroxy-tetrahydrodipicolinate reductase.